We begin with the raw amino-acid sequence, 739 residues long: uncharacterized protein (739 aa).

8 helical membrane passes run 53–73 (LALG…ALTV), 90–110 (WHLF…AAIP), 114–134 (LMFI…GTFM), 178–198 (TYIL…QLGL), 421–441 (LIWI…VCIV), 457–477 (AFLR…LALM), 491–511 (GLAM…LPAV), and 532–552 (IVYF…SWMY).

This sequence belongs to the aromatic acid exporter ArAE (TC 2.A.85) family.

Its subcellular location is the cell membrane. This is an uncharacterized protein from Gluconobacter oxydans (strain 621H) (Gluconobacter suboxydans).